The chain runs to 1262 residues: ATP-dependent helicase/nuclease subunit A (1262 aa).

Residues 5–476 (FSFTPSQDQA…IVLAENFRSM (472 aa)) form the UvrD-like helicase ATP-binding domain. ATP is bound at residue 26–33 (ASAGSGKT). The 294-residue stretch at 515-808 (DTVTSTAELL…SVMTIHGSKG (294 aa)) folds into the UvrD-like helicase C-terminal domain.

It belongs to the helicase family. AddA subfamily. Heterodimer of AddA and AddB/RexB. It depends on Mg(2+) as a cofactor.

It carries out the reaction Couples ATP hydrolysis with the unwinding of duplex DNA by translocating in the 3'-5' direction.. The enzyme catalyses ATP + H2O = ADP + phosphate + H(+). Functionally, the heterodimer acts as both an ATP-dependent DNA helicase and an ATP-dependent, dual-direction single-stranded exonuclease. Recognizes the chi site generating a DNA molecule suitable for the initiation of homologous recombination. The AddA nuclease domain is required for chi fragment generation; this subunit has the helicase and 3' -&gt; 5' nuclease activities. The sequence is that of ATP-dependent helicase/nuclease subunit A from Levilactobacillus brevis (strain ATCC 367 / BCRC 12310 / CIP 105137 / JCM 1170 / LMG 11437 / NCIMB 947 / NCTC 947) (Lactobacillus brevis).